Reading from the N-terminus, the 482-residue chain is Adenylosuccinate lyase (482 aa).

Substrate contacts are provided by residues 14–15 (RY), 82–84 (RHD), and 108–109 (TS). Residue histidine 156 is the Proton donor/acceptor of the active site. A Glycyl lysine isopeptide (Lys-Gly) (interchain with G-Cter in ubiquitin) cross-link involves residue lysine 196. A substrate-binding site is contributed by glutamine 238. Serine 286 serves as the catalytic Proton donor/acceptor. Positions 300, 326, 331, and 335 each coordinate substrate.

This sequence belongs to the lyase 1 family. Adenylosuccinate lyase subfamily. As to quaternary structure, homotetramer. Residues from neighboring subunits contribute catalytic and substrate-binding residues to each active site.

It carries out the reaction N(6)-(1,2-dicarboxyethyl)-AMP = fumarate + AMP. It catalyses the reaction (2S)-2-[5-amino-1-(5-phospho-beta-D-ribosyl)imidazole-4-carboxamido]succinate = 5-amino-1-(5-phospho-beta-D-ribosyl)imidazole-4-carboxamide + fumarate. The protein operates within purine metabolism; AMP biosynthesis via de novo pathway; AMP from IMP: step 2/2. Its pathway is purine metabolism; IMP biosynthesis via de novo pathway; 5-amino-1-(5-phospho-D-ribosyl)imidazole-4-carboxamide from 5-amino-1-(5-phospho-D-ribosyl)imidazole-4-carboxylate: step 2/2. This chain is Adenylosuccinate lyase (ADE13), found in Saccharomyces cerevisiae (strain ATCC 204508 / S288c) (Baker's yeast).